We begin with the raw amino-acid sequence, 204 residues long: Inactive ribonuclease-like protein 9 (204 aa).

Positions 1–26 (MMRTLITIHPLPLLLLLQQLLQPVQF) are cleaved as a signal peptide. Disulfide bonds link Cys97–Cys152, Cys115–Cys167, and Cys122–Cys129. N-linked (GlcNAc...) asparagine glycans are attached at residues Asn130 and Asn142.

The protein belongs to the pancreatic ribonuclease family.

Its subcellular location is the secreted. In terms of biological role, does not exhibit any ribonuclease activity. The sequence is that of Inactive ribonuclease-like protein 9 (RNASE9) from Pongo pygmaeus (Bornean orangutan).